The primary structure comprises 198 residues: UPF0314 protein Saro_1818 (198 aa).

5 helical membrane passes run 13 to 33, 62 to 82, 96 to 116, 153 to 173, and 177 to 197; these read GGSL…LGMG, WYSF…HIVW, LALA…PIII, APVL…LWAI, and LALN…WQGG.

The protein belongs to the UPF0314 family.

Its subcellular location is the cell membrane. The polypeptide is UPF0314 protein Saro_1818 (Novosphingobium aromaticivorans (strain ATCC 700278 / DSM 12444 / CCUG 56034 / CIP 105152 / NBRC 16084 / F199)).